Consider the following 189-residue polypeptide: MIDEKNQAKIEHAVREILSAVGEDPDRPGLVETPARVARMYAEVFATKTAAPFDNYKLFKVEHPTEMVLLKDIPFYSMCEHHLLPFFGTVQVAYVPQHEQVIGLSKIPRLIDYCSQQPNVQERLTVSIATELQRILDPAGIAVSITARHMCMEMRGVSKPGVHTESSYYSGQFKTDLDLKREFLQRIAK.

Residues Cys-79, His-82, and Cys-151 each contribute to the Zn(2+) site.

It belongs to the GTP cyclohydrolase I family. As to quaternary structure, toroid-shaped homodecamer, composed of two pentamers of five dimers.

It carries out the reaction GTP + H2O = 7,8-dihydroneopterin 3'-triphosphate + formate + H(+). The protein operates within cofactor biosynthesis; 7,8-dihydroneopterin triphosphate biosynthesis; 7,8-dihydroneopterin triphosphate from GTP: step 1/1. This Lactiplantibacillus plantarum (strain ATCC BAA-793 / NCIMB 8826 / WCFS1) (Lactobacillus plantarum) protein is GTP cyclohydrolase 1.